The chain runs to 511 residues: Chromosomal replication initiator protein DnaA (511 aa).

The interval 1–90 is domain I, interacts with DnaA modulators; the sequence is MSVELWQQCV…KRSSAPRAAP (90 aa). Residues 91 to 174 form a domain II region; sequence NAPLAAAASQ…QVEGALKHTS (84 aa). Residues 133–162 are disordered; it reads VAAHDEPSRDSFDPMAGASSQQAPARAEQR. Residues 135–144 are compositionally biased toward basic and acidic residues; it reads AHDEPSRDSF. A domain III, AAA+ region region spans residues 175 to 391; sequence YLNRTFTFEN…GALKRVIAHS (217 aa). ATP contacts are provided by G219, G221, K222, and T223. The interval 392-511 is domain IV, binds dsDNA; the sequence is HFMGRDITIE…YKNLLRTLTT (120 aa).

This sequence belongs to the DnaA family. Oligomerizes as a right-handed, spiral filament on DNA at oriC.

It is found in the cytoplasm. Its function is as follows. Plays an essential role in the initiation and regulation of chromosomal replication. ATP-DnaA binds to the origin of replication (oriC) to initiate formation of the DNA replication initiation complex once per cell cycle. Binds the DnaA box (a 9 base pair repeat at the origin) and separates the double-stranded (ds)DNA. Forms a right-handed helical filament on oriC DNA; dsDNA binds to the exterior of the filament while single-stranded (ss)DNA is stabiized in the filament's interior. The ATP-DnaA-oriC complex binds and stabilizes one strand of the AT-rich DNA unwinding element (DUE), permitting loading of DNA polymerase. After initiation quickly degrades to an ADP-DnaA complex that is not apt for DNA replication. Binds acidic phospholipids. This Pseudomonas savastanoi pv. phaseolicola (strain 1448A / Race 6) (Pseudomonas syringae pv. phaseolicola (strain 1448A / Race 6)) protein is Chromosomal replication initiator protein DnaA.